A 176-amino-acid polypeptide reads, in one-letter code: Large ribosomal subunit protein uL10 (176 aa).

Belongs to the universal ribosomal protein uL10 family. As to quaternary structure, part of the ribosomal stalk of the 50S ribosomal subunit. The N-terminus interacts with L11 and the large rRNA to form the base of the stalk. The C-terminus forms an elongated spine to which L12 dimers bind in a sequential fashion forming a multimeric L10(L12)X complex.

Functionally, forms part of the ribosomal stalk, playing a central role in the interaction of the ribosome with GTP-bound translation factors. This Thioalkalivibrio sulfidiphilus (strain HL-EbGR7) protein is Large ribosomal subunit protein uL10.